The primary structure comprises 528 residues: Protein WHAT'S THIS FACTOR 1 homolog, chloroplastic (528 aa).

Residues 1–73 constitute a chloroplast transit peptide; that stretch reads MEPKLLLSAH…KTRVVVEPVR (73 aa). Positions 80 to 408 constitute a PORR domain; that stretch reads KELTFDSVVQ…VKEKMRALVS (329 aa). The interval 410–528 is disordered; sequence PRFPRRGGPR…FPDGTPREKW (119 aa). The segment covering 418 to 428 has biased composition (basic and acidic residues); that stretch reads PRKDEEGREVE. Over residues 429–491 the composition is skewed to acidic residues; it reads IDGSDADGEE…DDDDEDEEED (63 aa).

It is found in the plastid. It localises to the chloroplast. Functionally, RNA-binding protein involved in group II intron splicing. Binds specific group II introns and promotes their splicing. Functions in the context of a heterodimer with the ribonuclease III domain-containing protein RNC1. In Arabidopsis thaliana (Mouse-ear cress), this protein is Protein WHAT'S THIS FACTOR 1 homolog, chloroplastic.